A 197-amino-acid chain; its full sequence is Probable GTP-binding protein EngB (197 aa).

Residues 25 to 197 (SAPEIAFAGR…VRDEFFKFTR (173 aa)) form the EngB-type G domain. GTP is bound by residues 33–40 (GRSNVGKS), 60–64 (GCTRQ), 79–82 (DLPG), 146–149 (TKID), and 177–179 (ISI). Residues serine 40 and threonine 62 each coordinate Mg(2+).

The protein belongs to the TRAFAC class TrmE-Era-EngA-EngB-Septin-like GTPase superfamily. EngB GTPase family. The cofactor is Mg(2+).

In terms of biological role, necessary for normal cell division and for the maintenance of normal septation. The chain is Probable GTP-binding protein EngB from Wolbachia pipientis subsp. Culex pipiens (strain wPip).